A 409-amino-acid polypeptide reads, in one-letter code: Argininosuccinate synthase (409 aa).

Residues 12 to 20 and A39 each bind ATP; that span reads AYSGGLDTS. 2 residues coordinate L-citrulline: Y90 and S95. G120 provides a ligand contact to ATP. L-aspartate-binding residues include T122, N126, and D127. Position 126 (N126) interacts with L-citrulline. L-citrulline-binding residues include R130, S181, S190, E266, and Y278.

The protein belongs to the argininosuccinate synthase family. Type 1 subfamily. Homotetramer.

It is found in the cytoplasm. It carries out the reaction L-citrulline + L-aspartate + ATP = 2-(N(omega)-L-arginino)succinate + AMP + diphosphate + H(+). It functions in the pathway amino-acid biosynthesis; L-arginine biosynthesis; L-arginine from L-ornithine and carbamoyl phosphate: step 2/3. The polypeptide is Argininosuccinate synthase (Acidiphilium cryptum (strain JF-5)).